We begin with the raw amino-acid sequence, 100 residues long: Integration host factor subunit alpha (100 aa).

The segment at 54–73 (DLRDKRQRPGRNPKTGEEIP) is disordered.

The protein belongs to the bacterial histone-like protein family. Heterodimer of an alpha and a beta chain.

In terms of biological role, this protein is one of the two subunits of integration host factor, a specific DNA-binding protein that functions in genetic recombination as well as in transcriptional and translational control. This Pseudomonas savastanoi pv. phaseolicola (strain 1448A / Race 6) (Pseudomonas syringae pv. phaseolicola (strain 1448A / Race 6)) protein is Integration host factor subunit alpha.